Consider the following 343-residue polypeptide: Uroporphyrinogen decarboxylase (343 aa).

Residues 23–27 (RQAGR), Asp73, Tyr150, Ser205, and His322 contribute to the substrate site.

It belongs to the uroporphyrinogen decarboxylase family. As to quaternary structure, homodimer.

Its subcellular location is the cytoplasm. It carries out the reaction uroporphyrinogen III + 4 H(+) = coproporphyrinogen III + 4 CO2. It participates in porphyrin-containing compound metabolism; protoporphyrin-IX biosynthesis; coproporphyrinogen-III from 5-aminolevulinate: step 4/4. Its function is as follows. Catalyzes the decarboxylation of four acetate groups of uroporphyrinogen-III to yield coproporphyrinogen-III. The polypeptide is Uroporphyrinogen decarboxylase (Cereibacter sphaeroides (strain ATCC 17029 / ATH 2.4.9) (Rhodobacter sphaeroides)).